We begin with the raw amino-acid sequence, 620 residues long: Arginine--tRNA ligase (620 aa).

The 'HIGH' region motif lies at 147 to 157; the sequence is ANPTGPIHIGG.

The protein belongs to the class-I aminoacyl-tRNA synthetase family. In terms of assembly, monomer.

It is found in the cytoplasm. It catalyses the reaction tRNA(Arg) + L-arginine + ATP = L-arginyl-tRNA(Arg) + AMP + diphosphate. The chain is Arginine--tRNA ligase from Bifidobacterium longum (strain NCC 2705).